We begin with the raw amino-acid sequence, 423 residues long: Enolase (423 aa).

Gln-165 lines the (2R)-2-phosphoglycerate pocket. The active-site Proton donor is the Glu-209. Positions 244, 285, and 310 each coordinate Mg(2+). Residues Lys-335, Arg-364, Ser-365, and Lys-386 each coordinate (2R)-2-phosphoglycerate. Lys-335 acts as the Proton acceptor in catalysis.

This sequence belongs to the enolase family. Homooctamer formed by a tetramer of dimers. Mg(2+) serves as cofactor.

Its subcellular location is the cytoplasm. The protein localises to the secreted. The protein resides in the cell surface. The catalysed reaction is (2R)-2-phosphoglycerate = phosphoenolpyruvate + H2O. The protein operates within carbohydrate degradation; glycolysis; pyruvate from D-glyceraldehyde 3-phosphate: step 4/5. Its activity is regulated as follows. The covalent binding to the substrate causes inactivation of the enzyme, and possibly serves as a signal for the export of the protein. Functionally, catalyzes the reversible conversion of 2-phosphoglycerate (2-PG) into phosphoenolpyruvate (PEP). It is essential for the degradation of carbohydrates via glycolysis. The protein is Enolase of Methanocaldococcus jannaschii (strain ATCC 43067 / DSM 2661 / JAL-1 / JCM 10045 / NBRC 100440) (Methanococcus jannaschii).